Here is a 134-residue protein sequence, read N- to C-terminus: ATP synthase epsilon chain (134 aa).

Belongs to the ATPase epsilon chain family. In terms of assembly, F-type ATPases have 2 components, CF(1) - the catalytic core - and CF(0) - the membrane proton channel. CF(1) has five subunits: alpha(3), beta(3), gamma(1), delta(1), epsilon(1). CF(0) has three main subunits: a, b and c. In this bacterium the a and b subunits are transcribed but do not seem to be translated, thus the ATP synthase consists of the alpha, beta, gamma, delta, epsilon and c subunits.

Its subcellular location is the cell membrane. Functionally, produces ATP from ADP in the presence of a proton gradient across the membrane. The sequence is that of ATP synthase epsilon chain from Moorella thermoacetica (strain ATCC 39073 / JCM 9320).